The sequence spans 49 residues: Large ribosomal subunit protein bL33B (49 aa).

The protein belongs to the bacterial ribosomal protein bL33 family.

This chain is Large ribosomal subunit protein bL33B, found in Lactobacillus gasseri (strain ATCC 33323 / DSM 20243 / BCRC 14619 / CIP 102991 / JCM 1131 / KCTC 3163 / NCIMB 11718 / NCTC 13722 / AM63).